Consider the following 253-residue polypeptide: Sulfur carrier protein FdhD (253 aa).

The active-site Cysteine persulfide intermediate is the cysteine 100.

It belongs to the FdhD family.

The protein localises to the cytoplasm. Functionally, required for formate dehydrogenase (FDH) activity. Acts as a sulfur carrier protein that transfers sulfur from IscS to the molybdenum cofactor prior to its insertion into FDH. This is Sulfur carrier protein FdhD from Sulfolobus acidocaldarius (strain ATCC 33909 / DSM 639 / JCM 8929 / NBRC 15157 / NCIMB 11770).